The chain runs to 603 residues: Polypeptide N-acetylgalactosaminyltransferase 10 (603 aa).

Over 1 to 11 the chain is Cytoplasmic; the sequence is MRRKEKRLLQA. The helical; Signal-anchor for type II membrane protein transmembrane segment at 12–31 threads the bilayer; it reads VALALAALVLLPNVGLWALY. Residues 32–603 lie on the Lumenal side of the membrane; sequence RERQPDGSPG…STVLENFNRN (572 aa). Asparagine 124 and asparagine 146 each carry an N-linked (GlcNAc...) asparagine glycan. Disulfide bonds link cysteine 135–cysteine 365, cysteine 356–cysteine 432, cysteine 471–cysteine 488, cysteine 523–cysteine 538, and cysteine 563–cysteine 578. The tract at residues 144 to 253 is catalytic subdomain A; sequence LPNTSIIIPF…VNWLPPLLDR (110 aa). Residues aspartate 185 and arginine 214 each coordinate substrate. Aspartate 237 contributes to the Mn(2+) binding site. Residue serine 238 participates in substrate binding. Residue histidine 239 coordinates Mn(2+). The tract at residues 311 to 373 is catalytic subdomain B; that stretch reads PFESPVMAGG…PCSRVGHIYR (63 aa). A substrate-binding site is contributed by tryptophan 342. Mn(2+) is bound at residue histidine 370. Substrate contacts are provided by arginine 373 and tyrosine 378. Residues 373-384 are flexible loop; sequence RKYVPYKVPAGV. The region spanning 458–590 is the Ricin B-type lectin domain; it reads AAWGEIRNVG…SSLTQQWLFE (133 aa). N-linked (GlcNAc...) asparagine glycosylation is present at asparagine 593.

It belongs to the glycosyltransferase 2 family. GalNAc-T subfamily. Mn(2+) is required as a cofactor. In terms of tissue distribution, highly expressed in the sublingual gland, testis, small intestine, colon and ovary. Expressed at intermediate level in heart, brain, spleen, lung, stomach, cervix and uterus.

The protein localises to the golgi apparatus membrane. The catalysed reaction is L-seryl-[protein] + UDP-N-acetyl-alpha-D-galactosamine = a 3-O-[N-acetyl-alpha-D-galactosaminyl]-L-seryl-[protein] + UDP + H(+). It carries out the reaction L-threonyl-[protein] + UDP-N-acetyl-alpha-D-galactosamine = a 3-O-[N-acetyl-alpha-D-galactosaminyl]-L-threonyl-[protein] + UDP + H(+). Its pathway is protein modification; protein glycosylation. Catalyzes the initial reaction in O-linked oligosaccharide biosynthesis, the transfer of an N-acetyl-D-galactosamine residue to a serine or threonine residue on the protein receptor. Has activity toward Muc5Ac and EA2 peptide substrates. The protein is Polypeptide N-acetylgalactosaminyltransferase 10 (Galnt10) of Rattus norvegicus (Rat).